The chain runs to 310 residues: Biotin synthase (310 aa).

The Radical SAM core domain occupies 34-262 (GRVQLCALVN…TAQIRLSAGR (229 aa)). [4Fe-4S] cluster-binding residues include C49, C53, and C56. 4 residues coordinate [2Fe-2S] cluster: C93, C125, C185, and R257.

The protein belongs to the radical SAM superfamily. Biotin synthase family. In terms of assembly, homodimer. The cofactor is [4Fe-4S] cluster. [2Fe-2S] cluster serves as cofactor.

The enzyme catalyses (4R,5S)-dethiobiotin + (sulfur carrier)-SH + 2 reduced [2Fe-2S]-[ferredoxin] + 2 S-adenosyl-L-methionine = (sulfur carrier)-H + biotin + 2 5'-deoxyadenosine + 2 L-methionine + 2 oxidized [2Fe-2S]-[ferredoxin]. It functions in the pathway cofactor biosynthesis; biotin biosynthesis; biotin from 7,8-diaminononanoate: step 2/2. In terms of biological role, catalyzes the conversion of dethiobiotin (DTB) to biotin by the insertion of a sulfur atom into dethiobiotin via a radical-based mechanism. This is Biotin synthase from Synechococcus sp. (strain JA-3-3Ab) (Cyanobacteria bacterium Yellowstone A-Prime).